A 194-amino-acid polypeptide reads, in one-letter code: MKQSHFFAHLARMKLIQRWPLMRSVSSENISEHSLQVAFVAHALALIKNKKFDGKLNPEHIALLGMYHDTSEVLTGDLPTPVKYYNPDIAQEYKKIEAAAEQRLLSMLPEEFRDDFSPFLISGTANKEEQSIVKQADTICAYLKCLEELSAGNHEYEQAKRRLEETLEQRKSPEMDYFLTTFAPSFELSLDEIS.

Substrate-binding positions include 18-19 (RW) and His33. The HD domain maps to 30-142 (ISEHSLQVAF…VKQADTICAY (113 aa)). A divalent metal cation contacts are provided by His33, His68, and Asp69. Residues Asp69, 77-80 (DLPT), and Asp137 each bind substrate. Asp137 contacts a divalent metal cation.

The protein belongs to the 5DNU family. As to quaternary structure, homodimer. A divalent metal cation serves as cofactor.

The protein localises to the cytoplasm. It carries out the reaction a 2'-deoxyribonucleoside 5'-phosphate + H2O = a 2'-deoxyribonucleoside + phosphate. Its function is as follows. Catalyzes the strictly specific dephosphorylation of 2'-deoxyribonucleoside 5'-monophosphates. In Vibrio atlanticus (strain LGP32) (Vibrio splendidus (strain Mel32)), this protein is 5'-deoxynucleotidase VS_2195.